The chain runs to 734 residues: Photosystem I P700 chlorophyll a apoprotein A2 (734 aa).

Helical transmembrane passes span Ile46–Ala69, Leu135–Gln158, Leu175–Ile199, Ile273–Tyr291, Leu330–Tyr353, Ala369–Ile395, Ala417–His439, and Phe517–Val535. [4Fe-4S] cluster contacts are provided by Cys559 and Cys568. Helical transmembrane passes span Ala575–Trp596 and Leu643–Ile665. Chlorophyll a contacts are provided by His654, Met662, and Tyr670. Residue Trp671 participates in phylloquinone binding. The chain crosses the membrane as a helical span at residues Leu707–Ala727.

Belongs to the PsaA/PsaB family. As to quaternary structure, the PsaA/B heterodimer binds the P700 chlorophyll special pair and subsequent electron acceptors. PSI consists of a core antenna complex that captures photons, and an electron transfer chain that converts photonic excitation into a charge separation. The eukaryotic PSI reaction center is composed of at least 11 subunits. P700 is a chlorophyll a/chlorophyll a' dimer, A0 is one or more chlorophyll a, A1 is one or both phylloquinones and FX is a shared 4Fe-4S iron-sulfur center. is required as a cofactor.

The protein resides in the plastid. Its subcellular location is the chloroplast thylakoid membrane. The catalysed reaction is reduced [plastocyanin] + hnu + oxidized [2Fe-2S]-[ferredoxin] = oxidized [plastocyanin] + reduced [2Fe-2S]-[ferredoxin]. Its function is as follows. PsaA and PsaB bind P700, the primary electron donor of photosystem I (PSI), as well as the electron acceptors A0, A1 and FX. PSI is a plastocyanin-ferredoxin oxidoreductase, converting photonic excitation into a charge separation, which transfers an electron from the donor P700 chlorophyll pair to the spectroscopically characterized acceptors A0, A1, FX, FA and FB in turn. Oxidized P700 is reduced on the lumenal side of the thylakoid membrane by plastocyanin. The protein is Photosystem I P700 chlorophyll a apoprotein A2 of Piper cenocladum (Ant piper).